Reading from the N-terminus, the 421-residue chain is UDP-N-acetylglucosamine 1-carboxyvinyltransferase (421 aa).

Residue 22-23 (KN) coordinates phosphoenolpyruvate. Residue Arg93 participates in UDP-N-acetyl-alpha-D-glucosamine binding. The active-site Proton donor is the Cys117. Cys117 bears the 2-(S-cysteinyl)pyruvic acid O-phosphothioketal mark. UDP-N-acetyl-alpha-D-glucosamine contacts are provided by residues 122-126 (RPVDL), Asp308, and Val330.

This sequence belongs to the EPSP synthase family. MurA subfamily.

It localises to the cytoplasm. It carries out the reaction phosphoenolpyruvate + UDP-N-acetyl-alpha-D-glucosamine = UDP-N-acetyl-3-O-(1-carboxyvinyl)-alpha-D-glucosamine + phosphate. It functions in the pathway cell wall biogenesis; peptidoglycan biosynthesis. Cell wall formation. Adds enolpyruvyl to UDP-N-acetylglucosamine. This chain is UDP-N-acetylglucosamine 1-carboxyvinyltransferase, found in Stutzerimonas stutzeri (strain A1501) (Pseudomonas stutzeri).